We begin with the raw amino-acid sequence, 201 residues long: Ran-specific GTPase-activating protein (201 aa).

Residues 1–26 (MAAAKDTHEDHDTSTENTDESNHDPQ) show a composition bias toward basic and acidic residues. The tract at residues 1 to 35 (MAAAKDTHEDHDTSTENTDESNHDPQFEPIVSLPE) is disordered. The residue at position 2 (alanine 2) is an N-acetylalanine. Threonine 13 and threonine 18 each carry phosphothreonine. 2 positions are modified to phosphoserine: serine 21 and serine 60. The RanBD1 domain maps to 26 to 164 (QFEPIVSLPE…FEECRKEIEE (139 aa)). Residue lysine 150 is modified to N6-acetyllysine; alternate. Lysine 150 carries the post-translational modification N6-succinyllysine; alternate. Residues 163-201 (EEREKKAGSGKNDHAEKVAEKLEALSVKEETKEDAEEKQ) form a disordered region. N6-acetyllysine is present on lysine 183. Position 188 is a phosphoserine (serine 188). Lysine 190 is covalently cross-linked (Glycyl lysine isopeptide (Lys-Gly) (interchain with G-Cter in SUMO2)).

This sequence belongs to the RANBP1 family. Interacts with RAN (via C-terminus of GTP-bound form) but not with GDP-bound RAN. Identified in a complex composed of RAN, RANGAP1 and RANBP1. Identified in a complex that contains TNPO1, RAN and RANBP1. Identified in a complex that contains CSE1L, KPNA2, RAN and RANBP1. Identified in a complex with nucleotide-free RAN and RCC1.

Plays a role in RAN-dependent nucleocytoplasmic transport. Alleviates the TNPO1-dependent inhibition of RAN GTPase activity and mediates the dissociation of RAN from proteins involved in transport into the nucleus. Induces a conformation change in the complex formed by XPO1 and RAN that triggers the release of the nuclear export signal of cargo proteins. Promotes the disassembly of the complex formed by RAN and importin beta. Promotes dissociation of RAN from a complex with KPNA2 and CSE1L. Required for normal mitotic spindle assembly and normal progress through mitosis via its effect on RAN. Does not increase the RAN GTPase activity by itself, but increases GTP hydrolysis mediated by RANGAP1. Inhibits RCC1-dependent exchange of RAN-bound GDP by GTP. The protein is Ran-specific GTPase-activating protein (RANBP1) of Homo sapiens (Human).